Here is a 325-residue protein sequence, read N- to C-terminus: tRNA(Ile)-lysidine synthase (325 aa).

Residue 35–40 coordinates ATP; sequence SGGQDS.

It belongs to the tRNA(Ile)-lysidine synthase family.

The protein localises to the cytoplasm. The enzyme catalyses cytidine(34) in tRNA(Ile2) + L-lysine + ATP = lysidine(34) in tRNA(Ile2) + AMP + diphosphate + H(+). In terms of biological role, ligates lysine onto the cytidine present at position 34 of the AUA codon-specific tRNA(Ile) that contains the anticodon CAU, in an ATP-dependent manner. Cytidine is converted to lysidine, thus changing the amino acid specificity of the tRNA from methionine to isoleucine. The polypeptide is tRNA(Ile)-lysidine synthase (Gloeobacter violaceus (strain ATCC 29082 / PCC 7421)).